Here is a 71-residue protein sequence, read N- to C-terminus: Prophage lysis protein S homolog EssD (71 aa).

The protein belongs to the lambda phage S protein family.

The protein is Prophage lysis protein S homolog EssD (essD) of Escherichia coli (strain K12).